The sequence spans 416 residues: Multifunctional CCA protein (416 aa).

ATP is bound by residues glycine 8 and arginine 11. CTP is bound by residues glycine 8 and arginine 11. Mg(2+) is bound by residues glutamate 21 and aspartate 23. 3 residues coordinate ATP: arginine 91, arginine 137, and arginine 140. Arginine 91, arginine 137, and arginine 140 together coordinate CTP. One can recognise an HD domain in the interval 228-329; that stretch reads TGIHTLMVLK…LKLFDAVDAW (102 aa).

Belongs to the tRNA nucleotidyltransferase/poly(A) polymerase family. Bacterial CCA-adding enzyme type 1 subfamily. As to quaternary structure, monomer. Can also form homodimers and oligomers. Mg(2+) serves as cofactor. Requires Ni(2+) as cofactor.

The enzyme catalyses a tRNA precursor + 2 CTP + ATP = a tRNA with a 3' CCA end + 3 diphosphate. The catalysed reaction is a tRNA with a 3' CCA end + 2 CTP + ATP = a tRNA with a 3' CCACCA end + 3 diphosphate. Functionally, catalyzes the addition and repair of the essential 3'-terminal CCA sequence in tRNAs without using a nucleic acid template. Adds these three nucleotides in the order of C, C, and A to the tRNA nucleotide-73, using CTP and ATP as substrates and producing inorganic pyrophosphate. tRNA 3'-terminal CCA addition is required both for tRNA processing and repair. Also involved in tRNA surveillance by mediating tandem CCA addition to generate a CCACCA at the 3' terminus of unstable tRNAs. While stable tRNAs receive only 3'-terminal CCA, unstable tRNAs are marked with CCACCA and rapidly degraded. In Photorhabdus laumondii subsp. laumondii (strain DSM 15139 / CIP 105565 / TT01) (Photorhabdus luminescens subsp. laumondii), this protein is Multifunctional CCA protein.